We begin with the raw amino-acid sequence, 202 residues long: 3-isopropylmalate dehydratase small subunit 1 (202 aa).

Belongs to the LeuD family. LeuD type 1 subfamily. Heterodimer of LeuC and LeuD.

The catalysed reaction is (2R,3S)-3-isopropylmalate = (2S)-2-isopropylmalate. It participates in amino-acid biosynthesis; L-leucine biosynthesis; L-leucine from 3-methyl-2-oxobutanoate: step 2/4. Functionally, catalyzes the isomerization between 2-isopropylmalate and 3-isopropylmalate, via the formation of 2-isopropylmaleate. The sequence is that of 3-isopropylmalate dehydratase small subunit 1 from Bordetella pertussis (strain Tohama I / ATCC BAA-589 / NCTC 13251).